Consider the following 140-residue polypeptide: Nucleoside diphosphate kinase (140 aa).

Residues Lys10, Phe58, Arg86, Thr92, Arg103, and Asn113 each contribute to the ATP site. The active-site Pros-phosphohistidine intermediate is the His116.

Belongs to the NDK family. As to quaternary structure, homohexamer. It depends on Mg(2+) as a cofactor.

Its subcellular location is the cytoplasm. The enzyme catalyses a 2'-deoxyribonucleoside 5'-diphosphate + ATP = a 2'-deoxyribonucleoside 5'-triphosphate + ADP. It catalyses the reaction a ribonucleoside 5'-diphosphate + ATP = a ribonucleoside 5'-triphosphate + ADP. In terms of biological role, major role in the synthesis of nucleoside triphosphates other than ATP. The ATP gamma phosphate is transferred to the NDP beta phosphate via a ping-pong mechanism, using a phosphorylated active-site intermediate. The sequence is that of Nucleoside diphosphate kinase from Methanocaldococcus jannaschii (strain ATCC 43067 / DSM 2661 / JAL-1 / JCM 10045 / NBRC 100440) (Methanococcus jannaschii).